Consider the following 280-residue polypeptide: MKQHTLAEAIAHTGVGLHSGVSTHVRILPADAGSGRYFVRVDLPDSPIIPAQVAAVSQTVLSTQLGKGEAGVRTVEHLLAALAGMGVDNARIEIDGSEVPLLDGSAQEWVKSIAEVGLVTQAVTDNTVSWDIPEPIWIHQDDAFVAAIPASETRFSYGIDFDLPAIGNQWYSWPLTTESDTSFAKEVAPARTFGLLHQIEYLQKSGLIKGGSLDNALVCGPDGWVNPPLRFANEPVRHKILDLVGDLSLLGYFPRAHFLAYKASHNLHIQLAQRILALSN.

3 residues coordinate Zn(2+): histidine 77, histidine 238, and aspartate 242. Histidine 265 acts as the Proton donor in catalysis.

Belongs to the LpxC family. Requires Zn(2+) as cofactor.

It carries out the reaction a UDP-3-O-[(3R)-3-hydroxyacyl]-N-acetyl-alpha-D-glucosamine + H2O = a UDP-3-O-[(3R)-3-hydroxyacyl]-alpha-D-glucosamine + acetate. Its pathway is glycolipid biosynthesis; lipid IV(A) biosynthesis; lipid IV(A) from (3R)-3-hydroxytetradecanoyl-[acyl-carrier-protein] and UDP-N-acetyl-alpha-D-glucosamine: step 2/6. Catalyzes the hydrolysis of UDP-3-O-myristoyl-N-acetylglucosamine to form UDP-3-O-myristoylglucosamine and acetate, the committed step in lipid A biosynthesis. The polypeptide is UDP-3-O-acyl-N-acetylglucosamine deacetylase (Trichormus variabilis (strain ATCC 29413 / PCC 7937) (Anabaena variabilis)).